A 75-amino-acid chain; its full sequence is Large ribosomal subunit protein bL31 (75 aa).

Residues C16, C18, C37, and C40 each coordinate Zn(2+).

Belongs to the bacterial ribosomal protein bL31 family. Type A subfamily. As to quaternary structure, part of the 50S ribosomal subunit. Requires Zn(2+) as cofactor.

Functionally, binds the 23S rRNA. The sequence is that of Large ribosomal subunit protein bL31 from Baumannia cicadellinicola subsp. Homalodisca coagulata.